Here is a 448-residue protein sequence, read N- to C-terminus: MTTPTAIRRLDAADPDFARHLDHLLSWESVSDDSVNQRVLDIIKAVRERGDAALVEFTQKFDGLQVASMADLILPRERLELALTRITPGQREALEKAAERVRSYHEKQKQDSWSYTEADGTVLGQKVTPLDRAGLYVPGGKASYPSSVLMNAIPAKVAGVTEVVMVVPTPRGEINELVLAAACIAGVDRVFTIGGAQAVAALAYGTESVPKVDKVVGPGNIYVATAKRHVFGQVGIDMIAGPSEILVVCDGQTDPDWIAMDLFSQAEHDEDAQAILVSPDAEFLDKVAASITRLLPTMERAAIVETSINGRGALIKVADMAQAIEVANRIAPEHLELSVADPEAWLPQIRHAGAIFMGRHTSEALGDYCAGPNHVLPTSGTARFSSPLGVYDFQKRSSIIYCSPQGASELGKTASVLARGESLSGHARSAEYRITDPDWTAGNKEDGK.

NAD(+) contacts are provided by Y136, Q197, and N220. The substrate site is built by S243, Q265, and H268. Zn(2+) is bound by residues Q265 and H268. Active-site proton acceptor residues include E333 and H334. 4 residues coordinate substrate: H334, D367, E421, and H426. Zn(2+) is bound at residue D367. H426 provides a ligand contact to Zn(2+).

The protein belongs to the histidinol dehydrogenase family. Requires Zn(2+) as cofactor.

It carries out the reaction L-histidinol + 2 NAD(+) + H2O = L-histidine + 2 NADH + 3 H(+). It functions in the pathway amino-acid biosynthesis; L-histidine biosynthesis; L-histidine from 5-phospho-alpha-D-ribose 1-diphosphate: step 9/9. Its function is as follows. Catalyzes the sequential NAD-dependent oxidations of L-histidinol to L-histidinaldehyde and then to L-histidine. The sequence is that of Histidinol dehydrogenase from Pseudomonas syringae pv. syringae (strain B728a).